The chain runs to 583 residues: MSQSLHFSPNLTFAKQPFPKLPLPFPTSNSRYPVNNYKSLSIKASTSPSSSSDPQVLVADNGTGNSGVLYNNNNKSVTVSDPSSIEVDAVTETELKENGFRSTRRTKLVCTIGPATCGFEELEALAVGGMNVARINMCHGTREWHKSVIERVRRLNEEKGFAVAIMMDTEGSEIHMGDLGGASSAKAEDGEIWTFSVRAYDSPRPERTINVNYDGFAEDVKVGDELLVDGGMVRFEVIEKIGPDVKCRCTDPGLLLPRANLTFWRDGSLVRERNAMLPTISSKDWLDIDFGIAEGVDFIAISFVKSAEVINHLKSYIAARSRDSDIAVIAKIESIDSLKNLEEIIRASDGAMVARGDLGAQIPLEQVPSAQQNIVQVCRQLNKPVIVASQLLESMIEYPTPTRAEVADVSEAVRQRADALMLSGESAMGQYPEKALAVLRSVSVRIEKWWREEKHHEAMELPAIGSTYSDSISEEICNSAAKMANNLGVDALFVYTKDGHMASLLSRCRPDCPIFAFTTTTSVRRRLNLQWGLIPFRLSFADDMESNLNKTFSLLKARGMIKSGDLVIAVSDMLQSIQVMNVP.

The transit peptide at 1-74 (MSQSLHFSPN…NSGVLYNNNN (74 aa)) directs the protein to the chloroplast. Positions 43-52 (KASTSPSSSS) are enriched in low complexity. A disordered region spans residues 43–75 (KASTSPSSSSDPQVLVADNGTGNSGVLYNNNNK). Positions 62–75 (GTGNSGVLYNNNNK) are enriched in polar residues. A substrate-binding site is contributed by Arg-134. K(+) is bound by residues Asn-136, Asp-168, and Thr-169. 136-139 (NMCH) lines the ATP pocket. A Mg(2+)-binding site is contributed by Glu-333. Residues Gly-356, Asp-357, and Ser-389 each coordinate substrate. Asp-357 is a Mg(2+) binding site.

Belongs to the pyruvate kinase family. Oligomer of alpha and beta subunits. The cofactor is Mg(2+). K(+) serves as cofactor.

Its subcellular location is the plastid. The protein resides in the chloroplast. The catalysed reaction is pyruvate + ATP = phosphoenolpyruvate + ADP + H(+). It functions in the pathway carbohydrate degradation; glycolysis; pyruvate from D-glyceraldehyde 3-phosphate: step 5/5. The chain is Pyruvate kinase isozyme A, chloroplastic from Ricinus communis (Castor bean).